Reading from the N-terminus, the 585-residue chain is ADP-ribosylation factor-binding protein GGA2 (585 aa).

One can recognise a VHS domain in the interval 33 to 169; that stretch reads ACRMSLAEPD…LLKYKGYAFP (137 aa). Residues K180 and K287 each participate in a glycyl lysine isopeptide (Lys-Gly) (interchain with G-Cter in ubiquitin) cross-link. Positions 196–321 constitute a GAT domain; that stretch reads EIAQAAKLEE…LLEKFNLLKN (126 aa). Residues 358-378 form a disordered region; sequence LDEAPSQGNNNTNGTGTPAAA. The span at 365 to 374 shows a compositional bias: low complexity; sequence GNNNTNGTGT. A GAE domain is found at 466–581; the sequence is TTTAPARTLV…TQAEETAVFT (116 aa).

As to quaternary structure, binds to ARF1 and ARF2.

Its subcellular location is the golgi apparatus. It localises to the trans-Golgi network. Functionally, may play a role in the regulation of membrane traffic through the trans-Golgi network. The protein is ADP-ribosylation factor-binding protein GGA2 (GGA2) of Saccharomyces cerevisiae (strain ATCC 204508 / S288c) (Baker's yeast).